We begin with the raw amino-acid sequence, 316 residues long: Beta-ketoacyl-[acyl-carrier-protein] synthase III 1 (316 aa).

Residues Cys-112 and His-243 contribute to the active site. Residues 244 to 248 form an ACP-binding region; that stretch reads QANYR. Asn-273 is a catalytic residue.

It belongs to the thiolase-like superfamily. FabH family. Homodimer.

Its subcellular location is the cytoplasm. It carries out the reaction malonyl-[ACP] + acetyl-CoA + H(+) = 3-oxobutanoyl-[ACP] + CO2 + CoA. It participates in lipid metabolism; fatty acid biosynthesis. Functionally, catalyzes the condensation reaction of fatty acid synthesis by the addition to an acyl acceptor of two carbons from malonyl-ACP. Catalyzes the first condensation reaction which initiates fatty acid synthesis and may therefore play a role in governing the total rate of fatty acid production. Possesses both acetoacetyl-ACP synthase and acetyl transacylase activities. Its substrate specificity determines the biosynthesis of branched-chain and/or straight-chain of fatty acids. The polypeptide is Beta-ketoacyl-[acyl-carrier-protein] synthase III 1 (Vibrio vulnificus (strain CMCP6)).